Here is a 119-residue protein sequence, read N- to C-terminus: Large ribosomal subunit protein uL18 (119 aa).

The tract at residues 54–76 is disordered; that stretch reads LTSASTLADDVEGETPTEESRSV.

It belongs to the universal ribosomal protein uL18 family. Part of the 50S ribosomal subunit; part of the 5S rRNA/L5/L18/L25 subcomplex. Contacts the 5S and 23S rRNAs.

Its function is as follows. This is one of the proteins that bind and probably mediate the attachment of the 5S RNA into the large ribosomal subunit, where it forms part of the central protuberance. This chain is Large ribosomal subunit protein uL18, found in Salinibacter ruber (strain DSM 13855 / M31).